The following is a 702-amino-acid chain: MSNESTNDAPPDDDPDDPEPSVDHDDTDGLQDDPADSVDDAGEVDDLENLGSDVGVEGDVSIDEDNAEDDLLGGLRIDDTSDITVPDRLVDQVIGQEAAREIVKRAAKQHRHVMMIGSPGTGKSLLAKAMSRLLPKESLQDVLVYHNPDDSNEPKVRTVPAGKGEQIVDAHKEEARKRNQMRSFLMWIMILLAVGYALLIATPARPLLALLSAAGIYLLFRYTNRGSDAMVPKLLINNADRQVAPFEDATGAHAGAMLGDVRHDPFQSGGMATPSHERVEAGSIQKANKGVLFIDEINTLDVRSQQKLMTAIQEGEFSITGQSERSSGAMVQTEAVPCDFIMVAAGNMDAMENMHPALRSRIKGYGYEVYMDDTIEDTPDMRRKYARFVAQEVEKDGNLPHFAPDAIRELILEAKRRAGRKDSLTLKLRDLGGLVRVAGDIARSEGHDLTQRSDVLEAKKRSRSIEQQFVDNYIQRRKDYELGTTSEEAVGRVNGLAVMGGDSGIMLPVMAEITPAQSQEEGRIYATGQLKEMAEEAVENVSAIIKKFSDENMSEKDTHIQFVQAGEGGVDGDSASITVATAVISALEDIPVAQELAMTGSLSVRGDVLPVGGVTHKIEAAAKAGCERVIIPKANEDDVMIEDEYEEQIEIIPVTHISEVLDVALVGEPEKDSLVDRLKSITGKALDSASDSGTTGGNPSPQ.

The tract at residues 1–63 (MSNESTNDAP…VGVEGDVSID (63 aa)) is disordered. Topologically, residues 1–183 (MSNESTNDAP…EARKRNQMRS (183 aa)) are cytoplasmic. Acidic residues predominate over residues 10–48 (PPDDDPDDPEPSVDHDDTDGLQDDPADSVDDAGEVDDLE). Residue 117-124 (GSPGTGKS) participates in ATP binding. Residues 184–201 (FLMWIMILLAVGYALLIA) traverse the membrane as a helical segment. The Extracellular portion of the chain corresponds to 202–206 (TPARP). A helical transmembrane segment spans residues 207–223 (LLALLSAAGIYLLFRYT). The Cytoplasmic segment spans residues 224 to 702 (NRGSDAMVPK…GTTGGNPSPQ (479 aa)). Positions 487–667 (EEAVGRVNGL…SEVLDVALVG (181 aa)) constitute a Lon proteolytic domain. Residues Ser574 and Lys617 contribute to the active site.

Belongs to the peptidase S16 family. Archaeal LonB subfamily. As to quaternary structure, homohexamer. Organized in a ring with a central cavity.

It localises to the cell membrane. In terms of biological role, ATP-dependent serine protease that mediates the selective degradation of mutant and abnormal proteins as well as certain short-lived regulatory proteins. Degrades polypeptides processively. The chain is Archaeal Lon protease from Halobacterium salinarum (strain ATCC 700922 / JCM 11081 / NRC-1) (Halobacterium halobium).